The following is an 863-amino-acid chain: Transforming growth factor-beta receptor-associated protein 1 homolog (863 aa).

The CNH domain maps to 23-297; sequence RINIECIECC…QLLQDFEGKV (275 aa). The stretch at 564 to 729 is one CHCR repeat; it reads RPTSEERRGQ…LLSVYLDPDV (166 aa).

The protein belongs to the TRAP1 family. In terms of assembly, component of the putative class C core vacuole/endosome tethering (CORVET) complex.

The protein resides in the cytoplasm. The protein localises to the early endosome. Its function is as follows. Plays a role in the TGF-beta signaling pathway. Plays a role in vesicle-mediated protein trafficking of the endocytic membrane transport pathway. Believed to act as a component of the putative CORVET endosomal tethering complexes which is proposed to be involved in the Rab5-to-Rab7 endosome conversion probably implicating MON1A/B, and via binding SNAREs and SNARE complexes to mediate tethering and docking events during SNARE-mediated membrane fusion. The CORVET complex is proposed to function as a Rab5 effector to mediate early endosome fusion probably in specific endosome subpopulations. This chain is Transforming growth factor-beta receptor-associated protein 1 homolog (tgfbrap1), found in Danio rerio (Zebrafish).